A 625-amino-acid chain; its full sequence is Probable potassium transport system protein Kup 2 (625 aa).

Transmembrane regions (helical) follow at residues 10 to 30, 47 to 67, 104 to 124, 140 to 160, 172 to 192, 214 to 234, 250 to 270, 283 to 303, 347 to 367, 369 to 389, 396 to 416, and 422 to 442; these read LAAL…TSPL, GVHL…VVTL, VLLL…VITP, PAFK…LFAV, FGPV…AEII, GWHM…VEAL, WLGL…ALLM, LFPQ…TVIA, WLLL…SALA, AYGI…FFVV, PLPV…LLVV, and FFQG…VMAT.

The protein belongs to the HAK/KUP transporter (TC 2.A.72) family.

The protein resides in the cell inner membrane. The enzyme catalyses K(+)(in) + H(+)(in) = K(+)(out) + H(+)(out). Functionally, transport of potassium into the cell. Likely operates as a K(+):H(+) symporter. This chain is Probable potassium transport system protein Kup 2, found in Albidiferax ferrireducens (strain ATCC BAA-621 / DSM 15236 / T118) (Rhodoferax ferrireducens).